The sequence spans 400 residues: Carbamoyl phosphate synthase small chain (400 aa).

The tract at residues 1 to 199 is CPSase; that stretch reads MSNETNANST…PYVIEAEGEA (199 aa). 3 residues coordinate L-glutamine: Ser66, Gly250, and Gly252. One can recognise a Glutamine amidotransferase type-1 domain in the interval 200 to 395; that stretch reads RHTVVAYDLG…VALMDEDSEN (196 aa). The active-site Nucleophile is Cys278. Positions 279, 282, 320, 322, and 323 each coordinate L-glutamine. Catalysis depends on residues His368 and Glu370.

This sequence belongs to the CarA family. As to quaternary structure, composed of two chains; the small (or glutamine) chain promotes the hydrolysis of glutamine to ammonia, which is used by the large (or ammonia) chain to synthesize carbamoyl phosphate. Tetramer of heterodimers (alpha,beta)4.

It catalyses the reaction hydrogencarbonate + L-glutamine + 2 ATP + H2O = carbamoyl phosphate + L-glutamate + 2 ADP + phosphate + 2 H(+). The enzyme catalyses L-glutamine + H2O = L-glutamate + NH4(+). It participates in amino-acid biosynthesis; L-arginine biosynthesis; carbamoyl phosphate from bicarbonate: step 1/1. The protein operates within pyrimidine metabolism; UMP biosynthesis via de novo pathway; (S)-dihydroorotate from bicarbonate: step 1/3. Its function is as follows. Small subunit of the glutamine-dependent carbamoyl phosphate synthetase (CPSase). CPSase catalyzes the formation of carbamoyl phosphate from the ammonia moiety of glutamine, carbonate, and phosphate donated by ATP, constituting the first step of 2 biosynthetic pathways, one leading to arginine and/or urea and the other to pyrimidine nucleotides. The small subunit (glutamine amidotransferase) binds and cleaves glutamine to supply the large subunit with the substrate ammonia. The sequence is that of Carbamoyl phosphate synthase small chain from Corynebacterium efficiens (strain DSM 44549 / YS-314 / AJ 12310 / JCM 11189 / NBRC 100395).